A 1042-amino-acid chain; its full sequence is Carbamoyl phosphate synthase large chain (1042 aa).

The interval methionine 1–glutamate 417 is carboxyphosphate synthetic domain. ATP-binding residues include arginine 127, arginine 182, glycine 188, glycine 189, glutamate 221, isoleucine 223, glutamate 228, glycine 254, isoleucine 255, histidine 256, glutamine 297, and glutamate 314. Positions arginine 131–leucine 343 constitute an ATP-grasp 1 domain. Mg(2+) is bound by residues glutamine 297, glutamate 314, and asparagine 316. The Mn(2+) site is built by glutamine 297, glutamate 314, and asparagine 316. The interval tyrosine 418–arginine 558 is oligomerization domain. Residues alanine 559 to alanine 947 are carbamoyl phosphate synthetic domain. In terms of domain architecture, ATP-grasp 2 spans asparagine 689–alanine 880. Arginine 725, glutamate 764, leucine 766, glutamate 771, glycine 796, valine 797, histidine 798, serine 799, glutamine 839, and glutamate 851 together coordinate ATP. Positions 839, 851, and 853 each coordinate Mg(2+). Positions 839, 851, and 853 each coordinate Mn(2+). In terms of domain architecture, MGS-like spans alanine 947–glycine 1042. The segment at proline 948–glycine 1042 is allosteric domain.

It belongs to the CarB family. In terms of assembly, composed of two chains; the small (or glutamine) chain promotes the hydrolysis of glutamine to ammonia, which is used by the large (or ammonia) chain to synthesize carbamoyl phosphate. Tetramer of heterodimers (alpha,beta)4. The cofactor is Mg(2+). It depends on Mn(2+) as a cofactor.

It catalyses the reaction hydrogencarbonate + L-glutamine + 2 ATP + H2O = carbamoyl phosphate + L-glutamate + 2 ADP + phosphate + 2 H(+). The enzyme catalyses hydrogencarbonate + NH4(+) + 2 ATP = carbamoyl phosphate + 2 ADP + phosphate + 2 H(+). Its pathway is amino-acid biosynthesis; L-arginine biosynthesis; carbamoyl phosphate from bicarbonate: step 1/1. It participates in pyrimidine metabolism; UMP biosynthesis via de novo pathway; (S)-dihydroorotate from bicarbonate: step 1/3. In terms of biological role, large subunit of the glutamine-dependent carbamoyl phosphate synthetase (CPSase). CPSase catalyzes the formation of carbamoyl phosphate from the ammonia moiety of glutamine, carbonate, and phosphate donated by ATP, constituting the first step of 2 biosynthetic pathways, one leading to arginine and/or urea and the other to pyrimidine nucleotides. The large subunit (synthetase) binds the substrates ammonia (free or transferred from glutamine from the small subunit), hydrogencarbonate and ATP and carries out an ATP-coupled ligase reaction, activating hydrogencarbonate by forming carboxy phosphate which reacts with ammonia to form carbamoyl phosphate. The protein is Carbamoyl phosphate synthase large chain of Halobacterium salinarum (strain ATCC 700922 / JCM 11081 / NRC-1) (Halobacterium halobium).